The primary structure comprises 809 residues: Sucrose synthase 3 (809 aa).

Residues 277 to 755 (MVFNVVILSP…GLQRIYERYT (479 aa)) are GT-B glycosyltransferase.

It belongs to the glycosyltransferase 1 family. Plant sucrose synthase subfamily. Detected in the whole plant with highest expression in developing siliques, vasculature of cotyledons and stomatal guard cells. Also detected throughout the mature parts of the root but not in the expanding zone.

It catalyses the reaction an NDP-alpha-D-glucose + D-fructose = a ribonucleoside 5'-diphosphate + sucrose + H(+). Functionally, sucrose-cleaving enzyme that provides UDP-glucose and fructose for various metabolic pathways. Modulates metabolic homeostasis and direct carbon towards starch synthesis in developing seeds. The sequence is that of Sucrose synthase 3 (SUS3) from Arabidopsis thaliana (Mouse-ear cress).